The primary structure comprises 489 residues: UDP-N-acetylmuramoyl-L-alanyl-D-glutamate--2,6-diaminopimelate ligase (489 aa).

Ser30 serves as a coordination point for UDP-N-acetyl-alpha-D-muramoyl-L-alanyl-D-glutamate. 110 to 116 (GTNGKTT) provides a ligand contact to ATP. UDP-N-acetyl-alpha-D-muramoyl-L-alanyl-D-glutamate-binding positions include 152–153 (TT), Ser179, and Arg187. The residue at position 219 (Lys219) is an N6-carboxylysine. Residues Arg381, 405-408 (DNPR), Gly458, and Glu462 each bind meso-2,6-diaminopimelate. Positions 405–408 (DNPR) match the Meso-diaminopimelate recognition motif motif.

It belongs to the MurCDEF family. MurE subfamily. Requires Mg(2+) as cofactor. Carboxylation is probably crucial for Mg(2+) binding and, consequently, for the gamma-phosphate positioning of ATP.

The protein resides in the cytoplasm. The enzyme catalyses UDP-N-acetyl-alpha-D-muramoyl-L-alanyl-D-glutamate + meso-2,6-diaminopimelate + ATP = UDP-N-acetyl-alpha-D-muramoyl-L-alanyl-gamma-D-glutamyl-meso-2,6-diaminopimelate + ADP + phosphate + H(+). It functions in the pathway cell wall biogenesis; peptidoglycan biosynthesis. Catalyzes the addition of meso-diaminopimelic acid to the nucleotide precursor UDP-N-acetylmuramoyl-L-alanyl-D-glutamate (UMAG) in the biosynthesis of bacterial cell-wall peptidoglycan. This chain is UDP-N-acetylmuramoyl-L-alanyl-D-glutamate--2,6-diaminopimelate ligase, found in Syntrophomonas wolfei subsp. wolfei (strain DSM 2245B / Goettingen).